Consider the following 260-residue polypeptide: MLYNIPILTHLYEIRLRIIYLLYSIFLTCFCSYQYKEEIFYLLFIPLSKNFIYTDLIEAFITYIKLSIIVGIYLSYPIFLYQIWSFLIPGFFLYEKKLFRLLCLTSIFLYFLGSCIGYYLLFPIAFTFFLGFQKLGKDQLFTIELQAKIHEYLILNTKLIFSLSICFQLPVLILFLFKIYPKTYLWLIHKRRFIYLFFFILAAILSPPDILSQFILVIPLILFFEISLFCIKLIQKYNSFMEPIGFEPTASCLQSTRSTI.

6 helical membrane-spanning segments follow: residues 39 to 59, 68 to 88, 111 to 131, 159 to 179, 193 to 213, and 214 to 234; these read IFYLLFIPLSKNFIYTDLIEA, IIVGIYLSYPIFLYQIWSFLI, FLGSCIGYYLLFPIAFTFFLG, LIFSLSICFQLPVLILFLFKI, FIYLFFFILAAILSPPDILSQ, and FILVIPLILFFEISLFCIKLI.

Belongs to the TatC family.

The protein localises to the mitochondrion membrane. This is an uncharacterized protein from Reclinomonas americana.